The sequence spans 1439 residues: Receptor-type tyrosine-protein phosphatase kappa (1439 aa).

Residues 1-26 (MDTTAAAALPAFVALLLLSPWPLLGS) form the signal peptide. The Extracellular portion of the chain corresponds to 27 to 752 (AQGQFSAGGC…PAKQTDRVVK (726 aa)). One can recognise an MAM domain in the interval 31–194 (FSAGGCTFDD…IQVLSYPCDK (164 aa)). N-linked (GlcNAc...) asparagine glycans are attached at residues N101, N140, and N211. The 86-residue stretch at 196-281 (PHFLRLGDVE…TQSERGSGVS (86 aa)) folds into the Ig-like C2-type domain. Residues C216 and C270 are joined by a disulfide bond. 4 Fibronectin type-III domains span residues 294–389 (PIAP…CAEP), 392–488 (TPKT…TDED), 491–595 (GPVP…SAPT), and 597–680 (PDYE…GNLP). Residues N416, N424, N436, N462, N552, N586, N590, N607, and N690 are each glycosylated (N-linked (GlcNAc...) asparagine). A helical transmembrane segment spans residues 753-774 (IAGISAGILVFILLLLVVILIV). Over 775 to 1439 (KKSKLAKKRK…DVALEYLESS (665 aa)) the chain is Cytoplasmic. S856 bears the Phosphoserine mark. 2 Tyrosine-protein phosphatase domains span residues 887–1141 (FKEE…ILEA) and 1173–1435 (LKDE…ALEY). Substrate is bound by residues D1050, 1082–1088 (CSAGAGR), and Q1126. Residue C1082 is the Phosphocysteine intermediate of the active site. C1376 (phosphocysteine intermediate) is an active-site residue.

The protein belongs to the protein-tyrosine phosphatase family. Receptor class 2B subfamily. Post-translationally, this protein undergoes proteolytic processing. High levels in lung, brain and colon; less in liver, pancreas, stomach, kidney, placenta and mammary carcinoma.

The protein localises to the cell junction. Its subcellular location is the adherens junction. The protein resides in the cell membrane. The catalysed reaction is O-phospho-L-tyrosyl-[protein] + H2O = L-tyrosyl-[protein] + phosphate. Regulation of processes involving cell contact and adhesion such as growth control, tumor invasion, and metastasis. Negative regulator of EGFR signaling pathway. Forms complexes with beta-catenin and gamma-catenin/plakoglobin. Beta-catenin may be a substrate for the catalytic activity of PTPRK/PTP-kappa. The chain is Receptor-type tyrosine-protein phosphatase kappa (PTPRK) from Homo sapiens (Human).